The primary structure comprises 351 residues: Small ribosomal subunit biogenesis GTPase RsgA 1 (351 aa).

In terms of domain architecture, CP-type G spans 100 to 258 (LRTDAQIVAS…IIDTPGMREL (159 aa)). Residues 148–151 (SKVD) and 200–208 (GSSGAGKST) each bind GTP. C282, C287, H289, and C295 together coordinate Zn(2+).

This sequence belongs to the TRAFAC class YlqF/YawG GTPase family. RsgA subfamily. As to quaternary structure, monomer. Associates with 30S ribosomal subunit, binds 16S rRNA. Zn(2+) serves as cofactor.

It is found in the cytoplasm. One of several proteins that assist in the late maturation steps of the functional core of the 30S ribosomal subunit. Helps release RbfA from mature subunits. May play a role in the assembly of ribosomal proteins into the subunit. Circularly permuted GTPase that catalyzes slow GTP hydrolysis, GTPase activity is stimulated by the 30S ribosomal subunit. The sequence is that of Small ribosomal subunit biogenesis GTPase RsgA 1 from Oceanobacillus iheyensis (strain DSM 14371 / CIP 107618 / JCM 11309 / KCTC 3954 / HTE831).